The primary structure comprises 114 residues: Probable 4-amino-4-deoxy-L-arabinose-phosphoundecaprenol flippase subunit ArnE (114 aa).

An EamA domain is found at 39-112 (RSPWLWLALF…VIGGVALLGQ (74 aa)). 3 helical membrane passes run 41-61 (PWLWLALFALGSGLLVWLLVL), 64-84 (LPVSVAYPMLSLNFVIITLIA), and 91-111 (PVDVQHWFGVLLVIGGVALLG).

The protein belongs to the ArnE family. In terms of assembly, heterodimer of ArnE and ArnF.

It localises to the cell inner membrane. It functions in the pathway bacterial outer membrane biogenesis; lipopolysaccharide biosynthesis. In terms of biological role, translocates 4-amino-4-deoxy-L-arabinose-phosphoundecaprenol (alpha-L-Ara4N-phosphoundecaprenol) from the cytoplasmic to the periplasmic side of the inner membrane. The protein is Probable 4-amino-4-deoxy-L-arabinose-phosphoundecaprenol flippase subunit ArnE of Pseudomonas fluorescens (strain Pf0-1).